Reading from the N-terminus, the 366-residue chain is 3-dehydroquinate synthase (366 aa).

NAD(+) contacts are provided by residues 69–74 (DGEAYK), 103–107 (GVIGD), 127–128 (TT), lysine 140, and lysine 149. Positions 182, 245, and 262 each coordinate Zn(2+).

Belongs to the sugar phosphate cyclases superfamily. Dehydroquinate synthase family. Requires Co(2+) as cofactor. The cofactor is Zn(2+). NAD(+) is required as a cofactor.

The protein localises to the cytoplasm. It carries out the reaction 7-phospho-2-dehydro-3-deoxy-D-arabino-heptonate = 3-dehydroquinate + phosphate. Its pathway is metabolic intermediate biosynthesis; chorismate biosynthesis; chorismate from D-erythrose 4-phosphate and phosphoenolpyruvate: step 2/7. In terms of biological role, catalyzes the conversion of 3-deoxy-D-arabino-heptulosonate 7-phosphate (DAHP) to dehydroquinate (DHQ). The chain is 3-dehydroquinate synthase from Pseudomonas fluorescens (strain ATCC BAA-477 / NRRL B-23932 / Pf-5).